The sequence spans 326 residues: MFSSLNTRPAGQSLFGANTGGGLFGQSLANQPQQQQQPLQQQQQQAAPALGQSQINQNQQLGGSLWQPGSLTAYQKPIPEQIKLIVDKWNPNHPNCAFKTYLYNKVDEHTVPLYGPGPNEDPKEWEEALQRKPAPNFIPVLCSGFPSIVARLMLQRRVITEFNNKLHQINASLDAILSRHDLDHTVRAFNARRRHAELSRRCLHLAARVQVLRNRGYALSGDEDELKQKLQQIDKTLNDPAQGSRLEELWSRLIVLRGYAEDLKDQINQAGITESDGLGEEIEAKAKKILEDYDKQLQHLKKQVEEAKKDFEEWEKQHNPAPAPAR.

Positions 1–10 (MFSSLNTRPA) are enriched in polar residues. A disordered region spans residues 1–52 (MFSSLNTRPAGQSLFGANTGGGLFGQSLANQPQQQQQPLQQQQQQAAPALGQ). Residues 13-17 (SLFGA) form an SLFG repeat. A GLFG repeat occupies 22–25 (GLFG). A compositionally biased stretch (low complexity) spans 25–52 (GQSLANQPQQQQQPLQQQQQQAAPALGQ). Coiled-coil stretches lie at residues 218–239 (ALSG…TLND) and 280–321 (EEIE…HNPA).

This sequence belongs to the nucleoporin GLFG family. Component of the nuclear pore complex (NPC). NPC constitutes the exclusive means of nucleocytoplasmic transport. NPCs allow the passive diffusion of ions and small molecules and the active, nuclear transport receptor-mediated bidirectional transport of macromolecules such as proteins, RNAs, ribonucleoparticles (RNPs), and ribosomal subunits across the nuclear envelope. Due to its 8-fold rotational symmetry, all subunits are present with 8 copies or multiples thereof.

It localises to the nucleus. The protein localises to the nuclear pore complex. The protein resides in the nucleus membrane. Functions as a component of the nuclear pore complex (NPC). NPC components, collectively referred to as nucleoporins (NUPs), can play the role of both NPC structural components and of docking or interaction partners for transiently associated nuclear transport factors. Active directional transport is assured by both, a Phe-Gly (FG) repeat affinity gradient for these transport factors across the NPC and a transport cofactor concentration gradient across the nuclear envelope (GSP1 and GSP2 GTPases associated predominantly with GTP in the nucleus, with GDP in the cytoplasm). NUP57 plays an important role in several nuclear transport pathways including poly(A)+ RNA, tRNA, and pre-ribosome transport. The polypeptide is Nucleoporin NUP57 (NUP57) (Chaetomium thermophilum (strain DSM 1495 / CBS 144.50 / IMI 039719) (Thermochaetoides thermophila)).